The sequence spans 346 residues: tRNA pseudouridine synthase D (346 aa).

Asp81 acts as the Nucleophile in catalysis. The region spanning Gly157–Leu303 is the TRUD domain.

It belongs to the pseudouridine synthase TruD family.

The catalysed reaction is uridine(13) in tRNA = pseudouridine(13) in tRNA. Functionally, responsible for synthesis of pseudouridine from uracil-13 in transfer RNAs. In Stutzerimonas stutzeri (strain A1501) (Pseudomonas stutzeri), this protein is tRNA pseudouridine synthase D.